Here is a 472-residue protein sequence, read N- to C-terminus: Phosphoglucosamine mutase (472 aa).

Ser-123 (phosphoserine intermediate) is an active-site residue. Mg(2+) contacts are provided by Ser-123, Asp-262, Asp-264, and Asp-266. Ser-123 is modified (phosphoserine).

The protein belongs to the phosphohexose mutase family. It depends on Mg(2+) as a cofactor. In terms of processing, activated by phosphorylation.

The enzyme catalyses alpha-D-glucosamine 1-phosphate = D-glucosamine 6-phosphate. Functionally, catalyzes the conversion of glucosamine-6-phosphate to glucosamine-1-phosphate. The polypeptide is Phosphoglucosamine mutase (Synechococcus elongatus (strain ATCC 33912 / PCC 7942 / FACHB-805) (Anacystis nidulans R2)).